The chain runs to 140 residues: Ribonuclease P protein component (140 aa).

It belongs to the RnpA family. As to quaternary structure, consists of a catalytic RNA component (M1 or rnpB) and a protein subunit.

The enzyme catalyses Endonucleolytic cleavage of RNA, removing 5'-extranucleotides from tRNA precursor.. Functionally, RNaseP catalyzes the removal of the 5'-leader sequence from pre-tRNA to produce the mature 5'-terminus. It can also cleave other RNA substrates such as 4.5S RNA. The protein component plays an auxiliary but essential role in vivo by binding to the 5'-leader sequence and broadening the substrate specificity of the ribozyme. The protein is Ribonuclease P protein component of Ralstonia pickettii (strain 12J).